The following is a 282-amino-acid chain: Para-Rep C1 (282 aa).

The CRESS-DNA virus Rep endonuclease domain occupies 1–99 (MASKRWCFTL…ETLISEIGAP (99 aa)). The short motif at 7 to 10 (CFTL) is the RCR-1 element. Residues Glu-38 and His-47 each coordinate a divalent metal cation. Positions 47 to 49 (HLQ) match the RCR-2 motif. Positions 56 to 77 (KMIRLGGLKKKFGYRAHWEIAK) match the Nuclear localization signal motif. Tyr-86 acts as the For DNA cleavage activity in catalysis. The short motif at 86 to 89 (YCTK) is the RCR-3 element. Position 94 (Ser-94) interacts with a divalent metal cation. ATP is bound at residue 174–182 (GSDGGEGKS).

It belongs to the nanoviridea/circoviridae replication-associated protein family. As to quaternary structure, homooligomer (Potential). Rep binds to repeated DNA motifs (iterons). The cofactor is Mg(2+). Requires Mn(2+) as cofactor.

It is found in the host nucleus. It carries out the reaction ATP + H2O = ADP + phosphate + H(+). Its function is as follows. Initiates and terminates the replication only of its own subviral DNA molecule. The closed circular ssDNA genome is first converted to a superhelical dsDNA. Rep binds a specific hairpin at the genome origin of replication. Introduces an endonucleolytic nick within the intergenic region of the genome, thereby initiating the rolling circle replication (RCR). Following cleavage, binds covalently to the 5'-phosphate of DNA as a tyrosyl ester. The cleavage gives rise to a free 3'-OH that serves as a primer for the cellular DNA polymerase. The polymerase synthesizes the (+) strand DNA by rolling circle mechanism. After one round of replication, a Rep-catalyzed nucleotidyl transfer reaction releases a circular single-stranded virus genome, thereby terminating the replication. Displays origin-specific DNA cleavage, nucleotidyl transferase, ATPase and helicase activities. The polypeptide is Para-Rep C1 (C1) (Faba bean necrotic yellows C11 alphasatellite (FBNYC11A)).